We begin with the raw amino-acid sequence, 433 residues long: MEWLDLPLVRCAAGKVRLPGSKSISNRVLLLSALAEGTTTISNLLESDDTGRMLDALKMLGVAVTRTDEDQYLITGCSGRFSVKEADLFLGNAGTAFRPLTAVLSLMHGHYHLSGVPRMHERPIGDLVDALRQVGAVITYLEREHFPPLEIHPAAIHPADILINGNISSQFLSGLLMALPLAGEPATIIVNGTLISQPYVTLTIAQMAYFGVQVERESWLRFIVPGNQIYHSPGKIVVEGDASSASYFLAAGAIAGGPVRVDGVGRDSCQGDIRFVEALEAMGACIKMGSDWIESSAPGCRSDGKVLKAIDFDCNHIPDAAMTLATTALFAQGTTTLRNIASWRVKETDRITAMSTELRKLGAQVESGDDFLRITPPDDPLVANTVIDTYDDHRMAMCFSLISLGTPVRINDPHCVAKTFPDYFEKFTAITHQ.

Residues K22, S23, and R27 each coordinate 3-phosphoshikimate. K22 contacts phosphoenolpyruvate. Positions 94 and 122 each coordinate phosphoenolpyruvate. 3-phosphoshikimate-binding residues include S168, S169, Q170, S196, D319, and K346. Phosphoenolpyruvate is bound at residue Q170. The active-site Proton acceptor is the D319. Phosphoenolpyruvate contacts are provided by R350, R394, and K418.

The protein belongs to the EPSP synthase family. In terms of assembly, monomer.

It localises to the cytoplasm. The enzyme catalyses 3-phosphoshikimate + phosphoenolpyruvate = 5-O-(1-carboxyvinyl)-3-phosphoshikimate + phosphate. It participates in metabolic intermediate biosynthesis; chorismate biosynthesis; chorismate from D-erythrose 4-phosphate and phosphoenolpyruvate: step 6/7. In terms of biological role, catalyzes the transfer of the enolpyruvyl moiety of phosphoenolpyruvate (PEP) to the 5-hydroxyl of shikimate-3-phosphate (S3P) to produce enolpyruvyl shikimate-3-phosphate and inorganic phosphate. The protein is 3-phosphoshikimate 1-carboxyvinyltransferase of Nitrosomonas eutropha (strain DSM 101675 / C91 / Nm57).